A 340-amino-acid polypeptide reads, in one-letter code: Ferrochelatase (340 aa).

Residues H189 and E292 each coordinate Fe cation.

It belongs to the ferrochelatase family.

The protein resides in the cytoplasm. The enzyme catalyses heme b + 2 H(+) = protoporphyrin IX + Fe(2+). It functions in the pathway porphyrin-containing compound metabolism; protoheme biosynthesis; protoheme from protoporphyrin-IX: step 1/1. Functionally, catalyzes the ferrous insertion into protoporphyrin IX. In Pseudomonas syringae pv. syringae (strain B728a), this protein is Ferrochelatase.